The primary structure comprises 407 residues: Guanine nucleotide-binding protein alpha-1 subunit (407 aa).

Residue Gly2 is the site of N-myristoyl glycine attachment. Residue Cys3 is the site of S-palmitoyl cysteine attachment. Residues 73-407 (NDIKVLLLGA…MSNNLQSLMF (335 aa)) enclose the G-alpha domain. The tract at residues 76 to 89 (KVLLLGAGDSGKTT) is G1 motif. Positions 84, 85, 86, 87, 88, 89, 190, 215, 221, 243, 309, 310, 312, and 380 each coordinate GTP. Position 88 (Thr88) interacts with Mg(2+). A G2 motif region spans residues 213–221 (DILHCRIKT). Thr221 provides a ligand contact to Mg(2+). The tract at residues 236-245 (YRFFDVGGQR) is G3 motif. Positions 305-312 (ILFLNKLD) are G4 motif. The G5 motif stretch occupies residues 378 to 383 (TTATDT).

It belongs to the G-alpha family. G(q) subfamily. As to quaternary structure, g proteins are composed of 3 units; alpha, beta and gamma. The alpha chain contains the guanine nucleotide binding site. It depends on Mg(2+) as a cofactor.

Functionally, implicated in the mating and sporulation pathway. Probably coupled to mating-factor receptors. May act in concert with Ras1. This Schizosaccharomyces pombe (strain 972 / ATCC 24843) (Fission yeast) protein is Guanine nucleotide-binding protein alpha-1 subunit (gpa1).